The primary structure comprises 252 residues: Fructose-1,6-bisphosphatase/inositol-1-monophosphatase (252 aa).

Residues E65, D81, I83, and D84 each coordinate Mg(2+). Substrate is bound by residues 84-86 (DGS), R170, F175, and R194. D201 contacts Mg(2+).

It belongs to the inositol monophosphatase superfamily. FBPase class 4 family. As to quaternary structure, homodimer. Requires Mg(2+) as cofactor.

It carries out the reaction beta-D-fructose 1,6-bisphosphate + H2O = beta-D-fructose 6-phosphate + phosphate. The enzyme catalyses a myo-inositol phosphate + H2O = myo-inositol + phosphate. Its activity is regulated as follows. IMPase activity is inhibited by Ca(2+) and Zn(2+). In contrast to mammalian I-1-P phosphatases, is not inhibited by Li(+) up to 100 mM. Phosphatase with broad specificity; it can dephosphorylate fructose 1,6-bisphosphate, both D and L isomers of inositol-1-phosphate (I-1-P), 2'-AMP, pNPP, beta-glycerol phosphate, and alpha-D-glucose-1-phosphate. Cannot hydrolyze glucose-6-phosphate, fructose-6-phosphate, NAD(+) or 5'-AMP. May be involved in the biosynthesis of a unique osmolyte, di-myo-inositol 1,1-phosphate. This Methanocaldococcus jannaschii (strain ATCC 43067 / DSM 2661 / JAL-1 / JCM 10045 / NBRC 100440) (Methanococcus jannaschii) protein is Fructose-1,6-bisphosphatase/inositol-1-monophosphatase (suhB).